Reading from the N-terminus, the 942-residue chain is Endoprotease bli-4 (942 aa).

An N-terminal signal peptide occupies residues 1-22 (MRISIGRIAWQILAVLIAVAFT). Residues 23-116 (IEHDSICDES…EQRPKKRVKR (94 aa)) constitute a propeptide that is removed on maturation. At 117–871 (DYILLDNDVH…TLLIDSNKSS (755 aa)) the chain is on the lumenal side. Asp-124 contributes to the Ca(2+) binding site. The segment at 130-160 (PFRRSVLNRDGTRRAQRQQPQSPREIPSLPF) is disordered. In terms of domain architecture, Peptidase S8 spans 168–483 (QWYLHGGAVG…YGLIDGGALV (316 aa)). N-linked (GlcNAc...) asparagine glycosylation occurs at Asn-195. The active-site Charge relay system is the Asp-202. Asp-203 lines the substrate pocket. Asp-211, Asp-223, Asp-228, and Asp-230 together coordinate Ca(2+). The tract at residues 211 to 242 (DLAANYDPLASTDINDHDDDPTPQNNGDNKHG) is disordered. 238–239 (DN) serves as a coordination point for substrate. His-241 serves as the catalytic Charge relay system. Residues Leu-252, Asn-255, Gln-257, and Gly-259 each coordinate Ca(2+). 2 disulfides stabilise this stretch: Cys-258–Cys-407 and Cys-350–Cys-380. Substrate is bound by residues Glu-283, 300 to 305 (SWGPED), Asp-311, and 339 to 342 (ASGN). Asp-305 contributes to the Ca(2+) binding site. Residue Asp-348 coordinates Ca(2+). 2 residues coordinate substrate: Asp-353 and Tyr-355. A Ca(2+)-binding site is contributed by Glu-378. The active-site Charge relay system is the Ser-415. A substrate-binding site is contributed by Ser-415. The P/Homo B domain maps to 491–629 (TVPEQHICTY…TLLLYGTADP (139 aa)). Cys-498 and Cys-527 are oxidised to a cystine. The N-linked (GlcNAc...) asparagine glycan is linked to Asn-519. FU repeat units follow at residues 674–723 (NCHD…YYLD), 725–777 (DKCK…LVAD), and 804–850 (GKCD…STKS). An N-linked (GlcNAc...) asparagine glycan is attached at Asn-868. Residues 872–892 (GFGLMFWIVVSLIAACGICAC) traverse the membrane as a helical segment. The Cytoplasmic segment spans residues 893–942 (KKCASETKSSNVEYAPLAQYNATNGAINLGAHTDDEDDDEDEVFVNPQIV). The disordered stretch occupies residues 922 to 942 (GAHTDDEDDDEDEVFVNPQIV). Residues 926 to 935 (DDEDDDEDEV) are compositionally biased toward acidic residues.

Belongs to the peptidase S8 family. Furin subfamily. The cofactor is Ca(2+). In terms of tissue distribution, in larvae and adults, expressed in all hypodermal cells, vulva and ventral nerve cords. As to expression, most highly expressed isoform in the embryonic epidermis. Expressed primarily in the germline. In terms of tissue distribution, expressed primarily in pharyngeal epithelial cells.

It localises to the membrane. Functionally, serine endoprotease which cleaves proproteins at paired basic amino acids at the consensus RX(K/R)R motif. Involved in N-terminal processing of cuticle collagens and plays a role in cuticle biosynthesis. May cleave both sqt-3 and dpy-17 collagens to promote their secretion. Acts in ASEL sensory neurons to regulate high salt chemotaxis responses probably by cleaving insulin-like protein ins-6 into its mature and active form. Essential for embryonic and larval development. Involved in cuticle biosynthesis but dispensable for larval development. The chain is Endoprotease bli-4 (bli-4) from Caenorhabditis elegans.